We begin with the raw amino-acid sequence, 382 residues long: MKALHFGAGNIGRGFIGKLLADAGIQLTFADVNQVVLDALNARHSYQVHVVGETEQVDTVSGVNAVSSIGDDVVDLIAQVDLVTTAVGPVVLERIAPAIAKGLVKRKEQGNESPLNIIACENMVRGTTQLKGHVMNALPEDAKAWVEEHVGFVDSAVDRIVPPSASATNDPLEVTVETFSEWIVDKTQFKGALPNIPGMELTDNLMAFVERKLFTLNTGHAITAYLGKLAGHQTIRDAILDEKIRAVVKGAMEESGAVLIKRYGFDADKHAAYIQKILGRFENPYLKDDVERVGRQPLRKLSAGDRLIKPLLGTLEYSLPHKNLIQGIAGAMHFRSEDDPQAQELAALIADKGPQAALAQISGLDANSEVVSEAVTAYKAMQ.

An NAD(+)-binding site is contributed by 3–14 (ALHFGAGNIGRG). K269 is subject to N6-acetyllysine.

Belongs to the mannitol dehydrogenase family.

The catalysed reaction is D-mannitol 1-phosphate + NAD(+) = beta-D-fructose 6-phosphate + NADH + H(+). The polypeptide is Mannitol-1-phosphate 5-dehydrogenase (Escherichia coli O139:H28 (strain E24377A / ETEC)).